A 567-amino-acid polypeptide reads, in one-letter code: Urease subunit alpha (567 aa).

Positions 129-567 (GGIDSHIHFI…LPMAQRYFLF (439 aa)) constitute a Urease domain. 3 residues coordinate Ni(2+): His134, His136, and Lys217. Lys217 carries the post-translational modification N6-carboxylysine. His219 contributes to the substrate binding site. Residues His246 and His272 each contribute to the Ni(2+) site. Catalysis depends on His320, which acts as the Proton donor. Residue Asp360 participates in Ni(2+) binding.

This sequence belongs to the metallo-dependent hydrolases superfamily. Urease alpha subunit family. Heterotrimer of UreA (gamma), UreB (beta) and UreC (alpha) subunits. Three heterotrimers associate to form the active enzyme. Requires Ni cation as cofactor. Post-translationally, carboxylation allows a single lysine to coordinate two nickel ions.

Its subcellular location is the cytoplasm. The enzyme catalyses urea + 2 H2O + H(+) = hydrogencarbonate + 2 NH4(+). Its pathway is nitrogen metabolism; urea degradation; CO(2) and NH(3) from urea (urease route): step 1/1. The chain is Urease subunit alpha from Alcanivorax borkumensis (strain ATCC 700651 / DSM 11573 / NCIMB 13689 / SK2).